A 127-amino-acid chain; its full sequence is Glycine cleavage system H protein 1 (127 aa).

Positions 20–101 (SVTVGITAYA…MGEGWFFRFI (82 aa)) constitute a Lipoyl-binding domain. Lysine 60 is modified (N6-lipoyllysine).

The protein belongs to the GcvH family. As to quaternary structure, the glycine cleavage system is composed of four proteins: P, T, L and H. (R)-lipoate serves as cofactor.

Its function is as follows. The glycine cleavage system catalyzes the degradation of glycine. The H protein shuttles the methylamine group of glycine from the P protein to the T protein. The polypeptide is Glycine cleavage system H protein 1 (Pseudomonas putida (strain ATCC 47054 / DSM 6125 / CFBP 8728 / NCIMB 11950 / KT2440)).